We begin with the raw amino-acid sequence, 161 residues long: SsrA-binding protein (161 aa).

A disordered region spans residues Lys-140–Gly-161.

Belongs to the SmpB family.

It is found in the cytoplasm. In terms of biological role, required for rescue of stalled ribosomes mediated by trans-translation. Binds to transfer-messenger RNA (tmRNA), required for stable association of tmRNA with ribosomes. tmRNA and SmpB together mimic tRNA shape, replacing the anticodon stem-loop with SmpB. tmRNA is encoded by the ssrA gene; the 2 termini fold to resemble tRNA(Ala) and it encodes a 'tag peptide', a short internal open reading frame. During trans-translation Ala-aminoacylated tmRNA acts like a tRNA, entering the A-site of stalled ribosomes, displacing the stalled mRNA. The ribosome then switches to translate the ORF on the tmRNA; the nascent peptide is terminated with the 'tag peptide' encoded by the tmRNA and targeted for degradation. The ribosome is freed to recommence translation, which seems to be the essential function of trans-translation. This chain is SsrA-binding protein, found in Sphingopyxis alaskensis (strain DSM 13593 / LMG 18877 / RB2256) (Sphingomonas alaskensis).